The following is a 485-amino-acid chain: 3-isopropylmalate dehydratase large subunit (485 aa).

2 disordered regions span residues 1–20 and 73–92; these read MSDASSTAPSQAGATSQSTG and PERTIATPDHNVPTSDRSLP. [4Fe-4S] cluster is bound by residues Cys-364, Cys-424, and Cys-427.

It belongs to the aconitase/IPM isomerase family. LeuC type 1 subfamily. In terms of assembly, heterodimer of LeuC and LeuD. [4Fe-4S] cluster is required as a cofactor.

It catalyses the reaction (2R,3S)-3-isopropylmalate = (2S)-2-isopropylmalate. It functions in the pathway amino-acid biosynthesis; L-leucine biosynthesis; L-leucine from 3-methyl-2-oxobutanoate: step 2/4. Functionally, catalyzes the isomerization between 2-isopropylmalate and 3-isopropylmalate, via the formation of 2-isopropylmaleate. This chain is 3-isopropylmalate dehydratase large subunit, found in Rhodopirellula baltica (strain DSM 10527 / NCIMB 13988 / SH1).